The following is a 281-amino-acid chain: Shikimate dehydrogenase (NADP(+)) (281 aa).

Residues 20–22 (SRS) and Thr67 contribute to the shikimate site. Catalysis depends on Lys71, which acts as the Proton acceptor. An NADP(+)-binding site is contributed by Asp83. Asn92 and Asp108 together coordinate shikimate. Residues 133-137 (GAGGA), 157-162 (NRTEAR), and Met225 each bind NADP(+). Tyr227 contacts shikimate. Gly248 serves as a coordination point for NADP(+).

Belongs to the shikimate dehydrogenase family. In terms of assembly, homodimer.

It catalyses the reaction shikimate + NADP(+) = 3-dehydroshikimate + NADPH + H(+). It functions in the pathway metabolic intermediate biosynthesis; chorismate biosynthesis; chorismate from D-erythrose 4-phosphate and phosphoenolpyruvate: step 4/7. Functionally, involved in the biosynthesis of the chorismate, which leads to the biosynthesis of aromatic amino acids. Catalyzes the reversible NADPH linked reduction of 3-dehydroshikimate (DHSA) to yield shikimate (SA). This is Shikimate dehydrogenase (NADP(+)) from Paracidovorax citrulli (strain AAC00-1) (Acidovorax citrulli).